We begin with the raw amino-acid sequence, 22 residues long: Leptoglycin (22 aa).

The segment at 1 to 22 (GLLGGLLGPLLGGGGGGGGGLL) is disordered.

In terms of tissue distribution, expressed by the skin glands.

Its subcellular location is the secreted. Functionally, antimicrobial protein. Has antibacterial activity against the Gram-negative bacteria E.coli ATCC 28922 (MIC=50 uM), P.aeruginosa ATCC 9027 (MIC=8 uM) and C.freundii ATCC 8090 (MIC=75 uM). Does not have hemolytic activity. The protein is Leptoglycin of Leptodactylus pentadactylus (Smokey jungle frog).